A 103-amino-acid polypeptide reads, in one-letter code: Large ribosomal subunit protein bL21 (103 aa).

It belongs to the bacterial ribosomal protein bL21 family. As to quaternary structure, part of the 50S ribosomal subunit. Contacts protein L20.

This protein binds to 23S rRNA in the presence of protein L20. The chain is Large ribosomal subunit protein bL21 from Cupriavidus metallidurans (strain ATCC 43123 / DSM 2839 / NBRC 102507 / CH34) (Ralstonia metallidurans).